The chain runs to 465 residues: MTEVLLLPGTKSENSKPPHIVVFPFPAQGHLLPLLDLTHQLCLRGFNVSVIVTPGNLTYLSPLLSAHPSSVTSVVFPFPPHPSLSPGVENVKDVGNSGNLPIMASLRQLREPIINWFQSHPNPPIALISDFFLGWTHDLCNQIGIPRFAFFSISFFLVSVLQFCFENIDLIKSTDPIHLLDLPRAPIFKEEHLPSIVRRSLQTPSPDLESIKDFSMNLLSYGSVFNSSEILEDDYLQYVKQRMGHDRVYVIGPLCSIGSGLKSNSGSVDPSLLSWLDGSPNGSVLYVCFGSQKALTKDQCDALALGLEKSMTRFVWVVKKDPIPDGFEDRVSGRGLVVRGWVSQLAVLRHVAVGGFLSHCGWNSVLEGITSGAVILGWPMEADQFVNARLLVEHLGVAVRVCEGGETVPDSDELGRVIAETMGEGGREVAARAEEIRRKTEAAVTEANGSSVENVQRLVKEFEKV.

UDP-alpha-D-glucose contacts are provided by residues Ser-291, 342–344 (VSQ), 359–367 (HCGWNSVLE), and 381–384 (EADQ).

It belongs to the UDP-glycosyltransferase family.

Functionally, glucosyltransferase that glucosylates benzoates and benzoate derivatives in vitro. The protein is UDP-glycosyltransferase 89A2 (UGT89A2) of Arabidopsis thaliana (Mouse-ear cress).